Here is a 172-residue protein sequence, read N- to C-terminus: Shikimate kinase (172 aa).

14-19 lines the ATP pocket; the sequence is GAGKST. A Mg(2+)-binding site is contributed by Ser-18. Asp-36, Arg-60, and Gly-82 together coordinate substrate. Arg-120 provides a ligand contact to ATP. Arg-139 contributes to the substrate binding site. Residue Gln-156 coordinates ATP.

This sequence belongs to the shikimate kinase family. As to quaternary structure, monomer. Requires Mg(2+) as cofactor.

The protein localises to the cytoplasm. The enzyme catalyses shikimate + ATP = 3-phosphoshikimate + ADP + H(+). Its pathway is metabolic intermediate biosynthesis; chorismate biosynthesis; chorismate from D-erythrose 4-phosphate and phosphoenolpyruvate: step 5/7. Functionally, catalyzes the specific phosphorylation of the 3-hydroxyl group of shikimic acid using ATP as a cosubstrate. The polypeptide is Shikimate kinase (Vibrio campbellii (strain ATCC BAA-1116)).